The primary structure comprises 553 residues: Flagellar hook-associated protein 1 (553 aa).

The protein belongs to the flagella basal body rod proteins family.

It is found in the secreted. The protein resides in the bacterial flagellum. In Salmonella typhi, this protein is Flagellar hook-associated protein 1 (flgK).